Consider the following 439-residue polypeptide: Serine hydroxymethyltransferase (439 aa).

Residues 1 to 20 (MNAPHRDETTASHRDDGFFT) form a disordered region. Residues Leu-136 and 140 to 142 (GHL) each bind (6S)-5,6,7,8-tetrahydrofolate. N6-(pyridoxal phosphate)lysine is present on Lys-245.

This sequence belongs to the SHMT family. Homodimer. Pyridoxal 5'-phosphate is required as a cofactor.

It localises to the cytoplasm. The enzyme catalyses (6R)-5,10-methylene-5,6,7,8-tetrahydrofolate + glycine + H2O = (6S)-5,6,7,8-tetrahydrofolate + L-serine. The protein operates within one-carbon metabolism; tetrahydrofolate interconversion. It participates in amino-acid biosynthesis; glycine biosynthesis; glycine from L-serine: step 1/1. Catalyzes the reversible interconversion of serine and glycine with tetrahydrofolate (THF) serving as the one-carbon carrier. This reaction serves as the major source of one-carbon groups required for the biosynthesis of purines, thymidylate, methionine, and other important biomolecules. Also exhibits THF-independent aldolase activity toward beta-hydroxyamino acids, producing glycine and aldehydes, via a retro-aldol mechanism. In Jannaschia sp. (strain CCS1), this protein is Serine hydroxymethyltransferase.